We begin with the raw amino-acid sequence, 244 residues long: Na(+)-translocating NADH-quinone reductase subunit E (244 aa).

A run of 6 helical transmembrane segments spans residues 11–31, 47–67, 90–110, 123–143, 153–173, and 189–209; these read LLGIFLQATFIQNILLSTFLG, GLGMSVALVLTITGSINWLIH, FLELITFIVVIAAFTQILELL, GIFLPLIAVNCAILGGVLFGI, VVFSLGSGCGWWLAIVLFATI, and MGISFITTGLIAMAFMGLTGI.

This sequence belongs to the NqrDE/RnfAE family. In terms of assembly, composed of six subunits; NqrA, NqrB, NqrC, NqrD, NqrE and NqrF.

It is found in the cell inner membrane. The catalysed reaction is a ubiquinone + n Na(+)(in) + NADH + H(+) = a ubiquinol + n Na(+)(out) + NAD(+). Functionally, NQR complex catalyzes the reduction of ubiquinone-1 to ubiquinol by two successive reactions, coupled with the transport of Na(+) ions from the cytoplasm to the periplasm. NqrA to NqrE are probably involved in the second step, the conversion of ubisemiquinone to ubiquinol. The chain is Na(+)-translocating NADH-quinone reductase subunit E from Chlamydia muridarum (strain MoPn / Nigg).